Here is a 109-residue protein sequence, read N- to C-terminus: COX assembly mitochondrial protein 2 (109 aa).

A CHCH domain is found at 10–54 (FHSCLDFINALDKCHQKEYYKRIFGLCNNEKDALNKCLKEASLNN). Short sequence motifs (cx9C motif) lie at residues 13 to 23 (CLDFINALDKC) and 36 to 46 (CNNEKDALNKC). Intrachain disulfides connect cysteine 13–cysteine 46 and cysteine 23–cysteine 36.

The protein belongs to the CMC family. Interacts with CMC1.

The protein localises to the mitochondrion inner membrane. The protein resides in the mitochondrion intermembrane space. Functionally, required for mitochondrial cytochrome c oxidase (COX) assembly and respiration. May be involved in copper trafficking and distribution to mitochondrial COX and SOD1. In Saccharomyces cerevisiae (strain ATCC 204508 / S288c) (Baker's yeast), this protein is COX assembly mitochondrial protein 2 (CMC2).